A 250-amino-acid chain; its full sequence is MAVTKLVLIRHGESQWNNENRFTGWTDVDLSDKGLTEAKQAGQVLKADGYVFDFAYTSVLKRAIHTLWGVLDELDQAWLPVEKSWRLNERHYGALQGLNKAETAEKYGDEQVKQWRRGFAITPPELTREDERFPGHDPRYANLSAAELPTTESLALTIDRVIPYWNETILPRMKSGERIIIAAHGNSIRAMVKFLDNLSEEEILELNIPTGVPLVYEFDDNMKPIKHYYLGNADEIAAKAAAVANQGKAK.

Residues 10–17, 23–24, Arg62, 89–92, Lys100, 116–117, and 185–186 contribute to the substrate site; these read RHGESQWN, TG, ERHY, RR, and GN. Residue His11 is the Tele-phosphohistidine intermediate of the active site. Glu89 functions as the Proton donor/acceptor in the catalytic mechanism.

This sequence belongs to the phosphoglycerate mutase family. BPG-dependent PGAM subfamily. Homodimer.

It catalyses the reaction (2R)-2-phosphoglycerate = (2R)-3-phosphoglycerate. It functions in the pathway carbohydrate degradation; glycolysis; pyruvate from D-glyceraldehyde 3-phosphate: step 3/5. Its function is as follows. Catalyzes the interconversion of 2-phosphoglycerate and 3-phosphoglycerate. The protein is 2,3-bisphosphoglycerate-dependent phosphoglycerate mutase of Sodalis glossinidius (strain morsitans).